The following is a 220-amino-acid chain: Iron-sulfur cluster repair protein YtfE (220 aa).

The protein belongs to the RIC family. YtfE subfamily. Homodimer.

The protein resides in the cytoplasm. Di-iron-containing protein involved in the repair of iron-sulfur clusters damaged by oxidative and nitrosative stress conditions. The sequence is that of Iron-sulfur cluster repair protein YtfE from Escherichia coli O81 (strain ED1a).